A 447-amino-acid chain; its full sequence is Probable ethanolamine kinase B (447 aa).

Positions 178–208 are enriched in low complexity; the sequence is STTISTSTSTSTSTSSTSPSTSPSLENSTLS. Positions 178 to 217 are disordered; that stretch reads STTISTSTSTSTSTSSTSPSTSPSLENSTLSPRNMNTQTS.

It belongs to the choline/ethanolamine kinase family.

Its subcellular location is the cytoplasm. The catalysed reaction is ethanolamine + ATP = phosphoethanolamine + ADP + H(+). It functions in the pathway phospholipid metabolism; phosphatidylethanolamine biosynthesis; phosphatidylethanolamine from ethanolamine: step 1/3. Highly specific for ethanolamine phosphorylation. May be a rate-controlling step in phosphatidylethanolamine biosynthesis. In Dictyostelium discoideum (Social amoeba), this protein is Probable ethanolamine kinase B (etnkB).